An 860-amino-acid chain; its full sequence is Beta-glucosidase A (860 aa).

An N-terminal signal peptide occupies residues 1 to 19; the sequence is MRFTLIEAVALTAVSLASA. Residues Asn61, Asn211, and Asn252 are each glycosylated (N-linked (GlcNAc...) asparagine). Asp280 is a catalytic residue. Residues Asn315, Asn322, Asn354, Asn387, Asn442, Asn523, Asn542, Asn564, Asn658, Asn690, and Asn712 are each glycosylated (N-linked (GlcNAc...) asparagine). Residues 719 to 753 are disordered; that stretch reads SSGDASYGQDSSDYLPEGATDGSAQPILPAGGGPG.

This sequence belongs to the glycosyl hydrolase 3 family.

The protein localises to the secreted. The enzyme catalyses Hydrolysis of terminal, non-reducing beta-D-glucosyl residues with release of beta-D-glucose.. The protein operates within glycan metabolism; cellulose degradation. Functionally, beta-glucosidases are one of a number of cellulolytic enzymes involved in the degradation of cellulosic biomass. Catalyzes the last step releasing glucose from the inhibitory cellobiose. This chain is Beta-glucosidase A (bglA), found in Aspergillus kawachii (strain NBRC 4308) (White koji mold).